The primary structure comprises 2092 residues: Nonribosomal peptide synthetase echPS (2092 aa).

The adenylation 1 stretch occupies residues 13-406; sequence FSQRCCQNPD…GRRDRVTKIR (394 aa). The region spanning 524-600 is the Carrier 1 domain; that stretch reads SGPLTIGQAI…SLIEKSRHET (77 aa). Ser-561 bears the O-(pantetheine 4'-phosphoryl)serine mark. The interval 596 to 626 is disordered; sequence SRHETEDTPDSSAFATRTPEESSMPTQGPVT. Residues 605-624 show a composition bias toward polar residues; sequence DSSAFATRTPEESSMPTQGP. The tract at residues 624–1017 is condensation 1; the sequence is PVTPLQKRMV…YTSLLDAFLD (394 aa). The segment at 1068–1446 is adenylation 2; sequence ASLYPTHVAV…GRKDRQVKVR (379 aa). A Carrier 2 domain is found at 1544 to 1622; that stretch reads IKTTHLEKLI…DLVILVAQQQ (79 aa). Position 1582 is an O-(pantetheine 4'-phosphoryl)serine (Ser-1582). Positions 1663-2047 are condensation 2; it reads SQSQSTFNVS…EALLLECFRI (385 aa).

Belongs to the NRP synthetase family. Pantetheine 4'-phosphate is required as a cofactor.

The enzyme catalyses L-tryptophan + L-alanine + 2 ATP = cyclo(L-tryptophyl-L-alanyl) + 2 ADP + 2 phosphate + 2 H(+). It participates in secondary metabolite biosynthesis. The protein operates within alkaloid biosynthesis. Nonribosomal peptide synthetase; part of the gene cluster that mediates the biosynthesis of echinulin family alkaloid. The pathway begins with the biosynthesis of the cyclic dipeptide cyclo-L-Trp-L-Ala (cyclo-TA) by the NRPS echPS via condensation of L-alanine and L-tryptophan. The prenyltransferase echPT1 then catalyzes the first prenylation step, a reverse prenylation reaction at C2, to yield preechinulin. Preechinulin is the substrate of the cytochrome P450 monooxygenase echP450 that catalyzes the formation of the double bond between C10 and C11 to produce neoechulin A. The unique prenyltransferase echPT2 functions as a competitive enzyme with echP450 for preechinulin metabolization and uses preechinulin for effective regiospecific prenylations. Preechinulin is prenylated by echPT2 at C5 or C7. C7-prenylation leads to accumulation of tardioxopiperazine B without further modification by echPT2. In contrast, the C5-prenylated tardioxopiperazine A can be prenylated again by echPT2, predominantly at C7 to form echinulin or less frequently at C4 to give variecolorin L. EchPT2 also accepts neoechilunin A to produce varlecolorin G (prenylation at C5) or isoechinulin A (prenylation at C7). EchPT2 further converts isoechinulin A into dehydroechinulin. Moreover, a yet unidentified enzyme can also convert neoechilunin A into neoechilunin B by introducing a double bond between positions C14 and C17 and thus provides a further substrate to echPT2 for C5 and C7 prenylation. The polypeptide is Nonribosomal peptide synthetase echPS (Aspergillus ruber (strain CBS 135680)).